A 508-amino-acid polypeptide reads, in one-letter code: Pyruvate kinase, cytosolic isozyme (508 aa).

R48 is a substrate binding site. Positions 50, 52, 82, and 83 each coordinate K(+). Position 50 to 53 (50 to 53 (NFSH)) interacts with ATP. ATP-binding residues include R89 and K174. E240 is a binding site for Mg(2+). The substrate site is built by G263, D264, and T296. Position 264 (D264) interacts with Mg(2+).

This sequence belongs to the pyruvate kinase family. As to quaternary structure, homotetramer. Mg(2+) is required as a cofactor. Requires K(+) as cofactor.

Its subcellular location is the cytoplasm. It catalyses the reaction pyruvate + ATP = phosphoenolpyruvate + ADP + H(+). The protein operates within carbohydrate degradation; glycolysis; pyruvate from D-glyceraldehyde 3-phosphate: step 5/5. The polypeptide is Pyruvate kinase, cytosolic isozyme (Nicotiana tabacum (Common tobacco)).